Here is a 251-residue protein sequence, read N- to C-terminus: Pyrroloquinoline-quinone synthase (251 aa).

The protein belongs to the PqqC family.

It catalyses the reaction 6-(2-amino-2-carboxyethyl)-7,8-dioxo-1,2,3,4,7,8-hexahydroquinoline-2,4-dicarboxylate + 3 O2 = pyrroloquinoline quinone + 2 H2O2 + 2 H2O + H(+). The protein operates within cofactor biosynthesis; pyrroloquinoline quinone biosynthesis. Its function is as follows. Ring cyclization and eight-electron oxidation of 3a-(2-amino-2-carboxyethyl)-4,5-dioxo-4,5,6,7,8,9-hexahydroquinoline-7,9-dicarboxylic-acid to PQQ. This chain is Pyrroloquinoline-quinone synthase, found in Pseudomonas entomophila (strain L48).